Reading from the N-terminus, the 287-residue chain is Rhomboid-like protein 18 (287 aa).

A run of 6 helical transmembrane segments spans residues N10–I30, L53–L73, V90–T110, L117–I137, V145–L165, and I172–I192. Residues E244–A284 form the UBA domain.

It belongs to the peptidase S54 family.

It localises to the membrane. Its function is as follows. Probable rhomboid-type serine protease that catalyzes intramembrane proteolysis. In Arabidopsis thaliana (Mouse-ear cress), this protein is Rhomboid-like protein 18.